The sequence spans 430 residues: Dihydroorotase (430 aa).

Residues H60 and H62 each contribute to the Zn(2+) site. Substrate is bound by residues 62–64 (HLR) and N94. Zn(2+) is bound by residues D152, H179, H232, and D305. D305 is an active-site residue. Residues H309 and 323–324 (FG) contribute to the substrate site.

It belongs to the metallo-dependent hydrolases superfamily. DHOase family. Class I DHOase subfamily. Requires Zn(2+) as cofactor.

The catalysed reaction is (S)-dihydroorotate + H2O = N-carbamoyl-L-aspartate + H(+). Its pathway is pyrimidine metabolism; UMP biosynthesis via de novo pathway; (S)-dihydroorotate from bicarbonate: step 3/3. Functionally, catalyzes the reversible cyclization of carbamoyl aspartate to dihydroorotate. In Solibacter usitatus (strain Ellin6076), this protein is Dihydroorotase.